We begin with the raw amino-acid sequence, 71 residues long: MVLENFKWSWISVGVTVGVGVGVCDGDGVGVGIGVGIGVGVSDGVSAGVGVGVAMIIQTSPSACKKYYKLY.

A helical membrane pass occupies residues 37 to 57; sequence IGVGVSDGVSAGVGVGVAMII.

The protein localises to the membrane. This is an uncharacterized protein from Dictyostelium discoideum (Social amoeba).